We begin with the raw amino-acid sequence, 100 residues long: Aspartyl/glutamyl-tRNA(Asn/Gln) amidotransferase subunit C (100 aa).

This sequence belongs to the GatC family. As to quaternary structure, heterotrimer of A, B and C subunits.

It carries out the reaction L-glutamyl-tRNA(Gln) + L-glutamine + ATP + H2O = L-glutaminyl-tRNA(Gln) + L-glutamate + ADP + phosphate + H(+). It catalyses the reaction L-aspartyl-tRNA(Asn) + L-glutamine + ATP + H2O = L-asparaginyl-tRNA(Asn) + L-glutamate + ADP + phosphate + 2 H(+). Its function is as follows. Allows the formation of correctly charged Asn-tRNA(Asn) or Gln-tRNA(Gln) through the transamidation of misacylated Asp-tRNA(Asn) or Glu-tRNA(Gln) in organisms which lack either or both of asparaginyl-tRNA or glutaminyl-tRNA synthetases. The reaction takes place in the presence of glutamine and ATP through an activated phospho-Asp-tRNA(Asn) or phospho-Glu-tRNA(Gln). The chain is Aspartyl/glutamyl-tRNA(Asn/Gln) amidotransferase subunit C from Streptococcus gordonii (strain Challis / ATCC 35105 / BCRC 15272 / CH1 / DL1 / V288).